A 282-amino-acid chain; its full sequence is Aquaporin NIP1-1 (282 aa).

The next 2 membrane-spanning stretches (helical) occupy residues Ile-46–Ile-66 and Ile-74–Val-94. The NPA 1 motif lies at Asn-103–Ala-105. 3 helical membrane passes run Val-125–Gly-145, Ser-162–Thr-182, and Ala-186–Ala-206. Residues Asn-215–Ala-217 carry the NPA 2 motif. A helical transmembrane segment spans residues Ile-232–Leu-252.

It belongs to the MIP/aquaporin (TC 1.A.8) family. NIP (TC 1.A.8.12) subfamily.

The protein resides in the membrane. Aquaporins facilitate the transport of water and small neutral solutes across cell membranes. The polypeptide is Aquaporin NIP1-1 (NIP1-1) (Zea mays (Maize)).